The chain runs to 179 residues: Guanosine-3',5'-bis(diphosphate) 3'-pyrophosphohydrolase MESH1 (179 aa).

An N-acetylglycine modification is found at Gly-2. Position 25 is an N6-acetyllysine (Lys-25). The HD domain maps to 32 to 127 (YINHPIGVAR…VKLADKLYNL (96 aa)). Positions 35, 61, and 62 each coordinate Mn(2+). Catalysis depends on nucleophile residues Glu-65 and Asp-66. Residue Lys-97 is modified to N6-acetyllysine. A Mn(2+)-binding site is contributed by Asp-122. N6-acetyllysine is present on Lys-123.

It belongs to the MESH1 family. Requires Mn(2+) as cofactor.

It catalyses the reaction guanosine 3',5'-bis(diphosphate) + H2O = GDP + diphosphate + H(+). PpGpp hydrolyzing enzyme involved in starvation response. The sequence is that of Guanosine-3',5'-bis(diphosphate) 3'-pyrophosphohydrolase MESH1 (Hddc3) from Mus musculus (Mouse).